A 782-amino-acid polypeptide reads, in one-letter code: Coiled-coil alpha-helical rod protein 1 (782 aa).

2 stretches are compositionally biased toward basic and acidic residues: residues 62-74 (ERDV…EPGR) and 208-218 (ETRRAGEAKEL). 2 disordered regions span residues 62–82 (ERDV…WGLE) and 177–218 (EQLS…AKEL). 3 coiled-coil regions span residues 111–303 (LRET…SLTH), 344–437 (LMVQ…NAVS), and 498–691 (VTDV…QQEG).

In terms of tissue distribution, found in all tissues tested, abundantly expressed in heart, liver, skeletal muscle, kidney and pancreas, and to a lesser extent in lung and placenta. Overexpressed in keratinocytes of psoriatic lesions.

It localises to the cytoplasm. It is found in the nucleus. In terms of biological role, may be a regulator of keratinocyte proliferation or differentiation. The sequence is that of Coiled-coil alpha-helical rod protein 1 (CCHCR1) from Homo sapiens (Human).